The following is a 68-amino-acid chain: Probable tautomerase HP_0924 (68 aa).

Catalysis depends on P2, which acts as the Proton acceptor; via imino nitrogen.

Belongs to the 4-oxalocrotonate tautomerase family.

The chain is Probable tautomerase HP_0924 from Helicobacter pylori (strain ATCC 700392 / 26695) (Campylobacter pylori).